The primary structure comprises 311 residues: GPN-loop GTPase 2 (311 aa).

GTP is bound at residue 20-25; that stretch reads GSGKTT. A Gly-Pro-Asn (GPN)-loop; involved in dimer interface motif is present at residues 77–79; sequence GPN. 179–182 contributes to the GTP binding site; it reads SKMD.

This sequence belongs to the GPN-loop GTPase family. Heterodimers with gpn1 or gpn3. Binds to RNA polymerase II (RNAPII).

Small GTPase required for proper localization of RNA polymerase II and III (RNAPII and RNAPIII). May act at an RNAP assembly step prior to nuclear import. This is GPN-loop GTPase 2 from Danio rerio (Zebrafish).